The primary structure comprises 940 residues: Serine/threonine-protein phosphatase 1 regulatory subunit 10 (940 aa).

Residues 1–348 (MGSGPIDPKE…EPAPPSEAME (348 aa)) form an interaction with TOX4 region. The region spanning 73–147 (KLLNNWLTYS…SDWMAVIRSQ (75 aa)) is the TFIIS N-terminal domain. Disordered stretches follow at residues 147–210 (QSST…KFRS), 248–270 (NVAAPGDATPPAEKKYKPLNTTP), 304–400 (KIKK…KSVT), and 534–557 (VETLEPGGSGGSPDGAGGSKLPPV). Composition is skewed to basic and acidic residues over residues 153 to 166 (AEKDKKKRKDEGKS) and 174 to 196 (PLTEVKAETRAEEAPEKKREKPK). A Glycyl lysine isopeptide (Lys-Gly) (interchain with G-Cter in SUMO2) cross-link involves residue lysine 179. Residue threonine 256 is modified to Phosphothreonine. Lysine 262 is covalently cross-linked (Glycyl lysine isopeptide (Lys-Gly) (interchain with G-Cter in SUMO2)). Serine 313 is subject to Phosphoserine. Over residues 325–336 (KTSTEPSTAKPS) the composition is skewed to low complexity. The interval 357 to 433 (PPVEVPELMD…NKIKDFGEAA (77 aa)) is necessary for interaction with PPP1CA. Serine 382 carries the post-translational modification Phosphoserine. A necessary for interaction with PPP1CC region spans residues 393 to 408 (GRKRKSVTWPEEGKLR). The PP1-binding motif signature appears at 394-423 (RKRKSVTWPEEGKLREYFYFELDETERVNV). Serine 398 is subject to Phosphoserine; by PKA. Residues 418-619 (TERVNVNKIK…IKQMLVPHGL (202 aa)) are interaction with WDR82. The span at 540–551 (GGSGGSPDGAGG) shows a compositional bias: gly residues. Phosphoserine is present on residues serine 545 and serine 591. Residues 617–905 (HGLLGPGPIA…HDGGHSHGGD (289 aa)) are disordered. The segment covering 644–655 (PPGPGGPMPGPH) has biased composition (pro residues). At arginine 665 the chain carries Omega-N-methylarginine. Positions 676–690 (GDPFWDGPGDPMRGG) are enriched in low complexity. An omega-N-methylarginine mark is found at arginine 693 and arginine 738. Gly residues-rich tracts occupy residues 725–763 (ARGGRSGGGPPNGRGGPGGGMVGGGGHRPHEGPGGGMGN) and 789–844 (GSMG…GSGG). 2 stretches are compositionally biased toward basic and acidic residues: residues 861 to 886 (PHDVPGHRGHDHRGPPPHEHRGHDGP) and 894 to 903 (RGHDGGHSHG). Residues 906–934 (MSNRPVCRHFMMKGNCRYENNCAFYHPGV) form a C3H1-type zinc finger.

In terms of assembly, component of the PNUTS-PP1 complex (also named PTW/PP1 complex), composed of PPP1R10/PNUTS, TOX4, WDR82, and PPP1CA (or PPP1CB or PPP1CC). Phosphorylated on Ser-398 by PKA within the region necessary for interaction with PPP1CA.

It is found in the nucleus. Its subcellular location is the chromosome. Its function is as follows. Substrate-recognition component of the PNUTS-PP1 protein phosphatase complex, a protein phosphatase 1 (PP1) complex that promotes RNA polymerase II transcription pause-release, allowing transcription elongation. Promoter-proximal pausing by RNA polymerase II is a transcription halt following transcription initiation but prior to elongation, which acts as a checkpoint to control that transcripts are favorably configured for transcriptional elongation. The PNUTS-PP1 complex mediates the release of RNA polymerase II from promoter-proximal region of genes by catalyzing dephosphorylation of proteins involved in transcription, such as AFF4, CDK9, MEPCE, INTS12, NCBP1, POLR2M/GDOWN1 and SUPT6H. The PNUTS-PP1 complex also regulates RNA polymerase II transcription termination by mediating dephosphorylation of SUPT5H in termination zones downstream of poly(A) sites, thereby promoting deceleration of RNA polymerase II transcription. PNUTS-PP1 complex is also involved in the response to replication stress by mediating dephosphorylation of POLR2A at 'Ser-5' of the CTD, promoting RNA polymerase II degradation. The PNUTS-PP1 complex also plays a role in the control of chromatin structure and cell cycle progression during the transition from mitosis into interphase. PNUTS-PP1 complex mediates dephosphorylation of MYC, promoting MYC stability by preventing MYC ubiquitination by the SCF(FBXW7) complex. In addition to acts as a substrate-recognition component, PPP1R10/PNUTS also acts as a nuclear targeting subunit for the PNUTS-PP1 complex. In some context, PPP1R10/PNUTS also acts as an inhibitor of protein phosphatase 1 (PP1) activity by preventing access to substrates, such as RB. This Pan troglodytes (Chimpanzee) protein is Serine/threonine-protein phosphatase 1 regulatory subunit 10 (PPP1R10).